The sequence spans 1593 residues: ABC transporter C family member 8 (1593 aa).

10 helical membrane passes run 27-47, 75-95, 100-120, 135-155, 169-189, 280-300, 318-338, 392-412, 419-439, and 505-525; these read VVMT…LYYL, VIVS…IVSI, FEIL…GLVY, LYWV…TLAI, FSYF…VLFF, FYIA…GPTL, YDGL…SLLL, LCPY…SLVL, ASVF…LAIS, and LLLW…VYIL. One can recognise an ABC transmembrane type-1 1 domain in the interval 280 to 561; that stretch reads FYIAALFKII…LPSVVSSIIE (282 aa). The ABC transporter 1 domain occupies 594 to 818; that stretch reads VKIDNATLEW…GSHFTELMSH (225 aa). 627-634 contacts ATP; sequence GQVGSGKS. A disordered region spans residues 816–938; sequence MSHDEQQQQL…PLQKGEKSSV (123 aa). Residues 844-875 are a coiled coil; sequence GDNKESENNEEQNEEEEGENENLLEKVLRKSR. Residues 851–865 show a composition bias toward acidic residues; sequence NNEEQNEEEEGENEN. Over residues 877–886 the composition is skewed to low complexity; the sequence is RSPSPSSNRN. The segment covering 905–922 has biased composition (acidic residues); it reads EEDEQDERELMEDIDIDG. Transmembrane regions (helical) follow at residues 1005-1025, 1064-1084, 1157-1177, 1251-1271, and 1280-1300; these read IGVL…LLSI, AKYY…ATFL, IIVI…VGAL, LAIR…LYTV, and GTAG…NWMV. In terms of domain architecture, ABC transmembrane type-1 2 spans 1010–1308; sequence ATCIIGFYVL…MVRMSCDLEN (299 aa). An ABC transporter 2 domain is found at 1344–1578; it reads IVFKNLWLTY…QDSIYYSLVK (235 aa). 1378-1385 serves as a coordination point for ATP; that stretch reads GRTGAGKS.

The protein belongs to the ABC transporter superfamily. ABCC family. Conjugate transporter (TC 3.A.1.208) subfamily.

The protein localises to the membrane. In Dictyostelium discoideum (Social amoeba), this protein is ABC transporter C family member 8 (abcC8).